Here is a 144-residue protein sequence, read N- to C-terminus: Putative pre-16S rRNA nuclease (144 aa).

Belongs to the YqgF nuclease family.

The protein localises to the cytoplasm. Its function is as follows. Could be a nuclease involved in processing of the 5'-end of pre-16S rRNA. This chain is Putative pre-16S rRNA nuclease, found in Prochlorococcus marinus (strain NATL1A).